The following is a 424-amino-acid chain: Serine--tRNA ligase (424 aa).

230–232 is an L-serine binding site; it reads TAE. 261 to 263 lines the ATP pocket; that stretch reads RSE. An L-serine-binding site is contributed by Glu284. Residue 348–351 coordinates ATP; the sequence is EISS. Ser384 provides a ligand contact to L-serine.

Belongs to the class-II aminoacyl-tRNA synthetase family. Type-1 seryl-tRNA synthetase subfamily. In terms of assembly, homodimer. The tRNA molecule binds across the dimer.

It localises to the cytoplasm. The catalysed reaction is tRNA(Ser) + L-serine + ATP = L-seryl-tRNA(Ser) + AMP + diphosphate + H(+). It carries out the reaction tRNA(Sec) + L-serine + ATP = L-seryl-tRNA(Sec) + AMP + diphosphate + H(+). It functions in the pathway aminoacyl-tRNA biosynthesis; selenocysteinyl-tRNA(Sec) biosynthesis; L-seryl-tRNA(Sec) from L-serine and tRNA(Sec): step 1/1. Its function is as follows. Catalyzes the attachment of serine to tRNA(Ser). Is also able to aminoacylate tRNA(Sec) with serine, to form the misacylated tRNA L-seryl-tRNA(Sec), which will be further converted into selenocysteinyl-tRNA(Sec). In Streptococcus pneumoniae (strain ATCC 700669 / Spain 23F-1), this protein is Serine--tRNA ligase.